The primary structure comprises 546 residues: Cytochrome P450 monooxygenase alnH (546 aa).

A helical transmembrane segment spans residues 11–31 (VPYSVPLLGSTVVILIGFIAI). Asparagine 146, asparagine 258, and asparagine 425 each carry an N-linked (GlcNAc...) asparagine glycan. Position 445 (cysteine 445) interacts with heme.

The protein belongs to the cytochrome P450 family. Heme is required as a cofactor.

It localises to the membrane. Its pathway is polyketide biosynthesis. Functionally, cytochrome P450 monooxygenase; part of the gene cluster that mediates the biosynthesis of asperlin, a polyketide showing anti-inflammatory, antitumor and antibiotic activities. The first step of the asperlin biosynthesis is the production of the intermediate 2,4,6-octatrienoic acid by the highly redusing polyketide synthase alnA with cleavage of the PKS product by the esterase alnB. 2,4,6-octatrienoic acid is further converted to asperlin via several steps involving the remaining enzymes from the cluster. This Emericella nidulans (strain FGSC A4 / ATCC 38163 / CBS 112.46 / NRRL 194 / M139) (Aspergillus nidulans) protein is Cytochrome P450 monooxygenase alnH.